The chain runs to 316 residues: Pantothenate kinase (316 aa).

ATP is bound at residue 95 to 102 (GSVAVGKS).

Belongs to the prokaryotic pantothenate kinase family.

Its subcellular location is the cytoplasm. It carries out the reaction (R)-pantothenate + ATP = (R)-4'-phosphopantothenate + ADP + H(+). It participates in cofactor biosynthesis; coenzyme A biosynthesis; CoA from (R)-pantothenate: step 1/5. This chain is Pantothenate kinase, found in Shewanella baltica (strain OS195).